Consider the following 368-residue polypeptide: MLDSSLAQEIAAIDGVELDSKVTFADLTTLRIGGKPRSAVRCQTTEALVSAIKLLDDASLPLLIVGGGSNLVVADGDLDVIAVIIETDDVSINLTDGLLTADAGAVWDDVVHLSVDAGLGGIECLSGIPGSAGATPVQNVGAYGTEVSDVLTRVQLLDRTTHQVSWVDASELDLSYRYSNLKFTNRAVVLAIELQLLTDGLSAPLRFGELGRRLAISEAEPHPRRPVRMVRDAVLELRRAKGMVVEHTDHDTWSAGSFFTNPIVDPALADAVFEKVGEPTMPRFPAGDGKEKLSAAWLIERAGFKKGHPGAGAKASLSTKHTLALTNRGDARASDLVALAKEIRDGVLETFGVTLVPEPVWIGISIDD.

One can recognise an FAD-binding PCMH-type domain in the interval 32–199 (IGGKPRSAVR…LAIELQLLTD (168 aa)). R177 is a catalytic residue. S257 functions as the Proton donor in the catalytic mechanism. E358 is an active-site residue.

It belongs to the MurB family. It depends on FAD as a cofactor.

The protein resides in the cytoplasm. The enzyme catalyses UDP-N-acetyl-alpha-D-muramate + NADP(+) = UDP-N-acetyl-3-O-(1-carboxyvinyl)-alpha-D-glucosamine + NADPH + H(+). Its pathway is cell wall biogenesis; peptidoglycan biosynthesis. Cell wall formation. This is UDP-N-acetylenolpyruvoylglucosamine reductase from Corynebacterium glutamicum (strain R).